The chain runs to 486 residues: UDP-N-acetylmuramate--L-alanine ligase (486 aa).

Position 126-132 (126-132) interacts with ATP; it reads GTHGKTS.

The protein belongs to the MurCDEF family.

The protein resides in the cytoplasm. It carries out the reaction UDP-N-acetyl-alpha-D-muramate + L-alanine + ATP = UDP-N-acetyl-alpha-D-muramoyl-L-alanine + ADP + phosphate + H(+). It functions in the pathway cell wall biogenesis; peptidoglycan biosynthesis. Functionally, cell wall formation. In Corynebacterium glutamicum (strain ATCC 13032 / DSM 20300 / JCM 1318 / BCRC 11384 / CCUG 27702 / LMG 3730 / NBRC 12168 / NCIMB 10025 / NRRL B-2784 / 534), this protein is UDP-N-acetylmuramate--L-alanine ligase.